Reading from the N-terminus, the 766-residue chain is Coenzyme PQQ synthesis protein F (766 aa).

Histidine 49 is a Zn(2+) binding site. Glutamate 52 (proton acceptor) is an active-site residue. Zn(2+) is bound by residues histidine 53 and glutamate 130.

This sequence belongs to the peptidase M16 family. It depends on Zn(2+) as a cofactor.

Its pathway is cofactor biosynthesis; pyrroloquinoline quinone biosynthesis. Required for coenzyme pyrroloquinoline quinone (PQQ) biosynthesis. It is thought that this protein is a protease that cleaves peptides bond in a small peptide (gene pqqA), providing the glutamate and tyrosine residues which are necessary for the synthesis of PQQ. This chain is Coenzyme PQQ synthesis protein F (pqqF), found in Pseudomonas putida (strain ATCC 47054 / DSM 6125 / CFBP 8728 / NCIMB 11950 / KT2440).